Reading from the N-terminus, the 447-residue chain is Crotonyl-CoA reductase (447 aa).

The protein belongs to the zinc-containing alcohol dehydrogenase family. Crotonyl-CoA carboxylase/reductase subfamily. Homodimer.

The enzyme catalyses butanoyl-CoA + NADP(+) = (2E)-butenoyl-CoA + NADPH + H(+). With respect to regulation, inhibited by divalent cations (30-100%), beta-chloromercuribenzoate (85%), iodoacetamide (40%) and N-ethylmaleamide (80%). The presence of CoA thioesters containing 12-20 carbon atoms results in inhibition of enzyme activity. The greatest degree of inhibition is observed in the presence of palmitoyl-CoA and myristoyl-CoA. The branched-chain fatty acids, isopalmitoyl-CoA and isomyristoyl-CoA are less effective inhibitors of the crotonyl-CoA reductase. Concentrations of NADPH above 200 uM lead to inhibition of enzyme activity. Its function is as follows. May play a role in supplying butyryl-CoA for straight-chain fatty acid biosynthesis. Catalyzes the conversion of crotonyl-CoA to butyryl-CoA. It shows a high substrate specificity for crotonyl-CoA, a short-chain-length (C4), but no measurable activity is observed with shorter (C3) or longer-chain-length enoyl-CoA thioesters. The chain is Crotonyl-CoA reductase (ccr) from Streptomyces collinus.